We begin with the raw amino-acid sequence, 306 residues long: Curved DNA-binding protein (306 aa).

The J domain occupies 5-69 (DYYAIMGVKP…QRRAEYDQMW (65 aa)).

It localises to the cytoplasm. It is found in the nucleoid. In terms of biological role, DNA-binding protein that preferentially recognizes a curved DNA sequence. It is probably a functional analog of DnaJ; displays overlapping activities with DnaJ, but functions under different conditions, probably acting as a molecular chaperone in an adaptive response to environmental stresses other than heat shock. Lacks autonomous chaperone activity; binds native substrates and targets them for recognition by DnaK. Its activity is inhibited by the binding of CbpM. In Escherichia fergusonii (strain ATCC 35469 / DSM 13698 / CCUG 18766 / IAM 14443 / JCM 21226 / LMG 7866 / NBRC 102419 / NCTC 12128 / CDC 0568-73), this protein is Curved DNA-binding protein.